The following is a 367-amino-acid chain: Undecaprenyl-phosphate alpha-N-acetylglucosaminyl 1-phosphate transferase (367 aa).

10 helical membrane passes run 3-23 (LLTV…FLFF), 46-66 (LIPL…FGIV), 69-89 (YIPH…IGAL), 132-152 (VLGP…INAF), 158-178 (IDGL…MILW), 187-207 (IWCF…LGIL), 213-233 (VFMG…ILLE), 242-262 (ISPV…VAIM), 294-314 (AFVL…LAEY), and 318-338 (VPEW…GYCI).

This sequence belongs to the glycosyltransferase 4 family. WecA subfamily. Mg(2+) is required as a cofactor. The cofactor is Mn(2+).

It localises to the cell inner membrane. The enzyme catalyses di-trans,octa-cis-undecaprenyl phosphate + UDP-N-acetyl-alpha-D-glucosamine = N-acetyl-alpha-D-glucosaminyl-di-trans,octa-cis-undecaprenyl diphosphate + UMP. It functions in the pathway bacterial outer membrane biogenesis; LPS O-antigen biosynthesis. The protein operates within bacterial outer membrane biogenesis; enterobacterial common antigen biosynthesis. Functionally, catalyzes the transfer of the GlcNAc-1-phosphate moiety from UDP-GlcNAc onto the carrier lipid undecaprenyl phosphate (C55-P), yielding GlcNAc-pyrophosphoryl-undecaprenyl (GlcNAc-PP-C55). The sequence is that of Undecaprenyl-phosphate alpha-N-acetylglucosaminyl 1-phosphate transferase from Escherichia coli O157:H7.